The primary structure comprises 69 residues: FMRFamide-like neuropeptides 24 (69 aa).

Positions 1–25 (MLSSRTSSIILILAILVAIMAVAQC) are cleaved as a signal peptide. Positions 26–51 (RNIQYDVEEMTPEAAFRYAQWGEIPH) are excised as a propeptide. F64 carries the phenylalanine amide modification. The propeptide occupies 68–69 (SI).

It belongs to the FARP (FMRFamide related peptide) family.

Its subcellular location is the secreted. In terms of biological role, probable FMRFamide-like neuropeptides. Plays a role in behaviors associated with a sleep-like state induced by stress (SIS), acting in concert with the FMRFamide related peptide flp-13 and neuropeptide-like protein nlp-8. This Caenorhabditis elegans protein is FMRFamide-like neuropeptides 24.